We begin with the raw amino-acid sequence, 179 residues long: Large ribosomal subunit protein uL5 (179 aa).

Belongs to the universal ribosomal protein uL5 family. In terms of assembly, part of the 50S ribosomal subunit; part of the 5S rRNA/L5/L18/L25 subcomplex. Contacts the 5S rRNA and the P site tRNA. Forms a bridge to the 30S subunit in the 70S ribosome.

In terms of biological role, this is one of the proteins that bind and probably mediate the attachment of the 5S RNA into the large ribosomal subunit, where it forms part of the central protuberance. In the 70S ribosome it contacts protein S13 of the 30S subunit (bridge B1b), connecting the 2 subunits; this bridge is implicated in subunit movement. Contacts the P site tRNA; the 5S rRNA and some of its associated proteins might help stabilize positioning of ribosome-bound tRNAs. The chain is Large ribosomal subunit protein uL5 from Clostridium novyi (strain NT).